The primary structure comprises 95 residues: Large ribosomal subunit protein uL23 (95 aa).

It belongs to the universal ribosomal protein uL23 family. In terms of assembly, part of the 50S ribosomal subunit. Contacts protein L29, and trigger factor when it is bound to the ribosome.

Its function is as follows. One of the early assembly proteins it binds 23S rRNA. One of the proteins that surrounds the polypeptide exit tunnel on the outside of the ribosome. Forms the main docking site for trigger factor binding to the ribosome. This chain is Large ribosomal subunit protein uL23, found in Desulforapulum autotrophicum (strain ATCC 43914 / DSM 3382 / VKM B-1955 / HRM2) (Desulfobacterium autotrophicum).